The following is a 319-amino-acid chain: Protein StrN (319 aa).

Its pathway is antibiotic biosynthesis; streptomycin biosynthesis. The sequence is that of Protein StrN (strN) from Streptomyces griseus.